A 280-amino-acid chain; its full sequence is 4-diphosphocytidyl-2-C-methyl-D-erythritol kinase (280 aa).

K8 is a catalytic residue. ATP is bound at residue 91–101 (PVAAGLAGGST). D133 is an active-site residue.

Belongs to the GHMP kinase family. IspE subfamily.

It catalyses the reaction 4-CDP-2-C-methyl-D-erythritol + ATP = 4-CDP-2-C-methyl-D-erythritol 2-phosphate + ADP + H(+). Its pathway is isoprenoid biosynthesis; isopentenyl diphosphate biosynthesis via DXP pathway; isopentenyl diphosphate from 1-deoxy-D-xylulose 5-phosphate: step 3/6. In terms of biological role, catalyzes the phosphorylation of the position 2 hydroxy group of 4-diphosphocytidyl-2C-methyl-D-erythritol. This chain is 4-diphosphocytidyl-2-C-methyl-D-erythritol kinase, found in Clostridium botulinum (strain Okra / Type B1).